A 406-amino-acid chain; its full sequence is telomere-associated protein 1 (406 aa).

Residues 20 to 40 (EHHNGSHDNDDKDKEDKEKQN) are compositionally biased toward basic and acidic residues. The segment at 20–46 (EHHNGSHDNDDKDKEDKEKQNTEAVAA) is disordered. In terms of domain architecture, HTH myb-type spans 147-206 (TTRRVRLRWTQEETADLMEGCKVHGVGNWKKILTDPRFRFNNRTAVDLKDRFRTCFPEDY). A DNA-binding region (H-T-H motif) is located at residues 175-202 (WKKILTDPRFRFNNRTAVDLKDRFRTCF). Residues 234–288 (VNRKERRVFTPEEDERLLNGFMKHGPSWSNIQRDNELGLFERRSTDLRDRFRNAF) form the Myb-like domain. The interval 368-389 (TQELQPQAHSRKQQGGDGLKEE) is disordered.

It is found in the nucleus. The protein resides in the chromosome. It localises to the telomere. Telomere-binding protein that mediates telomere clustering by promoting formation of head-to-head dimers of DNA molecules through the telomeric tracts. Binds specifically 5'-TTAGTCAGGG-3' repeats in subtelomeric regions. The sequence is that of telomere-associated protein 1 from Yarrowia lipolytica (strain CLIB 122 / E 150) (Yeast).